Here is a 505-residue protein sequence, read N- to C-terminus: 2,3-bisphosphoglycerate-independent phosphoglycerate mutase (505 aa).

2 residues coordinate Mn(2+): Asp-12 and Ser-62. The active-site Phosphoserine intermediate is Ser-62. Substrate contacts are provided by residues His-123, Arg-153–Asp-154, Arg-185, Arg-191, Arg-257–Arg-260, and Lys-330. Mn(2+)-binding residues include Asp-397, His-401, Asp-438, His-439, and His-456.

It belongs to the BPG-independent phosphoglycerate mutase family. As to quaternary structure, monomer. Mn(2+) serves as cofactor.

It carries out the reaction (2R)-2-phosphoglycerate = (2R)-3-phosphoglycerate. It functions in the pathway carbohydrate degradation; glycolysis; pyruvate from D-glyceraldehyde 3-phosphate: step 3/5. Its function is as follows. Catalyzes the interconversion of 2-phosphoglycerate and 3-phosphoglycerate. This is 2,3-bisphosphoglycerate-independent phosphoglycerate mutase from Staphylococcus epidermidis (strain ATCC 35984 / DSM 28319 / BCRC 17069 / CCUG 31568 / BM 3577 / RP62A).